Here is a 337-residue protein sequence, read N- to C-terminus: Tetraacyldisaccharide 4'-kinase (337 aa).

Residue 56–63 (VAGGAGKT) coordinates ATP.

The protein belongs to the LpxK family.

The catalysed reaction is a lipid A disaccharide + ATP = a lipid IVA + ADP + H(+). It participates in glycolipid biosynthesis; lipid IV(A) biosynthesis; lipid IV(A) from (3R)-3-hydroxytetradecanoyl-[acyl-carrier-protein] and UDP-N-acetyl-alpha-D-glucosamine: step 6/6. Functionally, transfers the gamma-phosphate of ATP to the 4'-position of a tetraacyldisaccharide 1-phosphate intermediate (termed DS-1-P) to form tetraacyldisaccharide 1,4'-bis-phosphate (lipid IVA). The protein is Tetraacyldisaccharide 4'-kinase of Rhodospirillum centenum (strain ATCC 51521 / SW).